Consider the following 163-residue polypeptide: Small t antigen (163 aa).

Methionine 1 bears the N-acetylmethionine; by host mark. One can recognise a J domain in the interval leucine 12–serine 76. The C4-type; atypical zinc-finger motif lies at cysteine 95–cysteine 107. The segment at histidine 113–cysteine 132 adopts an H1C3-type; atypical zinc-finger fold.

As to quaternary structure, interacts with host PPP2R1A; the interaction inhibits PP2A activity.

It localises to the host cytoplasm. It is found in the host nucleus. Promotes efficient viral genome replication by accelerating both G1 and S phase progression of the cell cycle. Inhibits host PP2A by binding to the A subunit, thereby displacing lower affinity regulatory B subunit. Inactivation of PP2A in turn results in the transactivation of cyclin A and cyclin D1 promoters. Late during the infection cycle, ST may induce dephosphorylation of host MTOR, leading to the inhibition of cap-dependent translation. May establish and maintain high levels of viral genomes during persistent infection in cell culture. The polypeptide is Small t antigen (Saimiri boliviensis boliviensis (Bolivian squirrel monkey)).